Reading from the N-terminus, the 241-residue chain is Uracil-DNA glycosylase (241 aa).

Residue Asp-68 is the Proton acceptor of the active site.

The protein belongs to the uracil-DNA glycosylase (UDG) superfamily. UNG family.

The protein localises to the cytoplasm. It catalyses the reaction Hydrolyzes single-stranded DNA or mismatched double-stranded DNA and polynucleotides, releasing free uracil.. Functionally, excises uracil residues from the DNA which can arise as a result of misincorporation of dUMP residues by DNA polymerase or due to deamination of cytosine. This Sinorhizobium medicae (strain WSM419) (Ensifer medicae) protein is Uracil-DNA glycosylase.